A 358-amino-acid polypeptide reads, in one-letter code: Phosphoribosylformylglycinamidine cyclo-ligase (358 aa).

Belongs to the AIR synthase family.

It is found in the cytoplasm. The enzyme catalyses 2-formamido-N(1)-(5-O-phospho-beta-D-ribosyl)acetamidine + ATP = 5-amino-1-(5-phospho-beta-D-ribosyl)imidazole + ADP + phosphate + H(+). Its pathway is purine metabolism; IMP biosynthesis via de novo pathway; 5-amino-1-(5-phospho-D-ribosyl)imidazole from N(2)-formyl-N(1)-(5-phospho-D-ribosyl)glycinamide: step 2/2. This is Phosphoribosylformylglycinamidine cyclo-ligase from Chromohalobacter salexigens (strain ATCC BAA-138 / DSM 3043 / CIP 106854 / NCIMB 13768 / 1H11).